The following is a 119-amino-acid chain: Large ribosomal subunit protein bL20 (119 aa).

The protein belongs to the bacterial ribosomal protein bL20 family.

Functionally, binds directly to 23S ribosomal RNA and is necessary for the in vitro assembly process of the 50S ribosomal subunit. It is not involved in the protein synthesizing functions of that subunit. The chain is Large ribosomal subunit protein bL20 from Bordetella bronchiseptica (strain ATCC BAA-588 / NCTC 13252 / RB50) (Alcaligenes bronchisepticus).